We begin with the raw amino-acid sequence, 444 residues long: Exodeoxyribonuclease 7 large subunit (444 aa).

It belongs to the XseA family. As to quaternary structure, heterooligomer composed of large and small subunits.

Its subcellular location is the cytoplasm. It carries out the reaction Exonucleolytic cleavage in either 5'- to 3'- or 3'- to 5'-direction to yield nucleoside 5'-phosphates.. Bidirectionally degrades single-stranded DNA into large acid-insoluble oligonucleotides, which are then degraded further into small acid-soluble oligonucleotides. The sequence is that of Exodeoxyribonuclease 7 large subunit from Xylella fastidiosa (strain 9a5c).